Here is an 81-residue protein sequence, read N- to C-terminus: Escargot/snail protein homolog (81 aa).

4 consecutive C2H2-type zinc fingers follow at residues 1-5 (HQQFH), 17-39 (FSCK…IRTH), 43-65 (CKCH…IRTH), and 71-81 (FSCQHCNRAFA).

Belongs to the snail C2H2-type zinc-finger protein family.

It is found in the nucleus. The polypeptide is Escargot/snail protein homolog (Apis mellifera (Honeybee)).